The following is a 553-amino-acid chain: Arginine--tRNA ligase (553 aa).

The 'HIGH' region signature appears at 122-132; the sequence is ANPTGFLHVGH.

Belongs to the class-I aminoacyl-tRNA synthetase family. Monomer.

Its subcellular location is the cytoplasm. It catalyses the reaction tRNA(Arg) + L-arginine + ATP = L-arginyl-tRNA(Arg) + AMP + diphosphate. This Mesoplasma florum (strain ATCC 33453 / NBRC 100688 / NCTC 11704 / L1) (Acholeplasma florum) protein is Arginine--tRNA ligase.